The following is a 1465-amino-acid chain: Gag-Pol polyprotein (1465 aa).

Residue Gly2 is the site of N-myristoyl glycine; by host attachment. The Nuclear export signal signature appears at 16–22 (FEHIRLR). Positions 26 to 32 (KKKYQIK) match the Nuclear localization signal motif. The segment at 116-144 (NAERNTTETSSGQKKNDKGVTVPPGGSQN) is disordered. 2 CCHC-type zinc fingers span residues 402-419 (VKCYNCGKFGHMQRQCPE) and 423-440 (MRCLKCGKPGHLAKDCRG). In terms of domain architecture, Peptidase A2 spans 532–603 (IRALLDTGAD…TPINIIGRNI (72 aa)). The active-site For protease activity; shared with dimeric partner is the Asp537. In terms of domain architecture, Reverse transcriptase spans 659 to 849 (EGKISKIGGE…PPYEWMGYKL (191 aa)). Mg(2+) is bound by residues Asp725, Asp800, and Asp801. The RT 'primer grip' stretch occupies residues 842-850 (YEWMGYKLW). The short motif at 1012–1028 (WEQWWADYWQVSWIPDW) is the Tryptophan repeat motif element. Positions 1048-1171 (IPKEDVYYVD…IDKLVSQGMR (124 aa)) constitute an RNase H type-1 domain. Asp1057, Glu1092, Asp1112, and Asp1163 together coordinate Mg(2+). An Integrase-type zinc finger spans residues 1177–1218 (EKIEEAQEEHERYHNNWRNLADTYGLPQIVAKEIVAMCPKCQ). The Zn(2+) site is built by His1186, His1190, Cys1214, and Cys1217. Positions 1228–1378 (VDASPGVWQM…TPAERLINMI (151 aa)) constitute an Integrase catalytic domain. The Mg(2+) site is built by Asp1238 and Asp1290. The integrase-type DNA-binding region spans 1397–1444 (FRVYYREGRDPVWKGPGQLIWKGEGAVVIKGGVELKEYPRRKAKIIKD).

Homotrimer. Interacts with gp41 (via C-terminus). In terms of assembly, homodimer. The active site consists of two apposed aspartic acid residues. As to quaternary structure, heterodimer of p66 RT and p51 RT (RT p66/p51). Heterodimerization of RT is essential for DNA polymerase activity. Despite the sequence identities, p66 RT and p51 RT have distinct folding. Homotetramer; may further associate as a homohexadecamer. It depends on Mg(2+) as a cofactor. In terms of processing, specific enzymatic cleavages by the viral protease yield mature proteins. The protease is released by autocatalytic cleavage. The polyprotein is cleaved during and after budding, this process is termed maturation. Proteolytic cleavage of p66 RT removes the RNase H domain to yield the p51 RT subunit. Capsid protein p24 is phosphorylated.

The protein localises to the virion. Its subcellular location is the host nucleus. It is found in the host cytoplasm. The protein resides in the host cell membrane. It catalyses the reaction Specific for a P1 residue that is hydrophobic, and P1' variable, but often Pro.. The catalysed reaction is Endohydrolysis of RNA in RNA/DNA hybrids. Three different cleavage modes: 1. sequence-specific internal cleavage of RNA. Human immunodeficiency virus type 1 and Moloney murine leukemia virus enzymes prefer to cleave the RNA strand one nucleotide away from the RNA-DNA junction. 2. RNA 5'-end directed cleavage 13-19 nucleotides from the RNA end. 3. DNA 3'-end directed cleavage 15-20 nucleotides away from the primer terminus.. It carries out the reaction 3'-end directed exonucleolytic cleavage of viral RNA-DNA hybrid.. The enzyme catalyses DNA(n) + a 2'-deoxyribonucleoside 5'-triphosphate = DNA(n+1) + diphosphate. Its activity is regulated as follows. The viral protease is inhibited by many synthetic protease inhibitors (PIs), such as amprenavir, atazanavir, indinavir, loprinavir, nelfinavir, ritonavir and saquinavir. RT can be inhibited either by nucleoside RT inhibitors (NRTIs) or by non nucleoside RT inhibitors (NNRTIs). NRTIs act as chain terminators, whereas NNRTIs inhibit DNA polymerization by binding a small hydrophobic pocket near the RT active site and inducing an allosteric change in this region. Classical NRTIs are abacavir, adefovir (PMEA), didanosine (ddI), lamivudine (3TC), stavudine (d4T), tenofovir (PMPA), zalcitabine (ddC), and zidovudine (AZT). Classical NNRTIs are atevirdine (BHAP U-87201E), delavirdine, efavirenz (DMP-266), emivirine (I-EBU), and nevirapine (BI-RG-587). The tritherapies used as a basic effective treatment of AIDS associate two NRTIs and one NNRTI. Use of protease inhibitors in tritherapy regimens permit more ambitious therapeutic strategies. Functionally, gag-Pol polyprotein and Gag polyprotein may regulate their own translation, by the binding genomic RNA in the 5'-UTR. At low concentration, Gag-Pol and Gag would promote translation, whereas at high concentration, the polyproteins encapsidate genomic RNA and then shut off translation. Matrix protein p17 has two main functions: in infected cell, it targets Gag and Gag-pol polyproteins to the plasma membrane via a multipartite membrane-binding signal, that includes its myristointegration complex. The myristoylation signal and the NLS exert conflicting influences its subcellular localization. The key regulation of these motifs might be phosphorylation of a portion of MA molecules on the C-terminal tyrosine at the time of virus maturation, by virion-associated cellular tyrosine kinase. Implicated in the release from host cell mediated by Vpu. In terms of biological role, capsid protein p24 forms the conical core that encapsulates the genomic RNA-nucleocapsid complex in the virion. The core is constituted by capsid protein hexamer subunits. The core is disassembled soon after virion entry. Interaction with host PPIA/CYPA protects the virus from restriction by host TRIM5-alpha and from an unknown antiviral activity in host cells. This capsid restriction by TRIM5 is one of the factors which restricts SIV to the simian species. Its function is as follows. Nucleocapsid protein p7 encapsulates and protects viral dimeric unspliced (genomic) RNA. Binds these RNAs through its zinc fingers. Facilitates rearangement of nucleic acid secondary structure during retrotranscription of genomic RNA. This capability is referred to as nucleic acid chaperone activity. Functionally, the aspartyl protease mediates proteolytic cleavages of Gag and Gag-Pol polyproteins during or shortly after the release of the virion from the plasma membrane. Cleavages take place as an ordered, step-wise cascade to yield mature proteins. This process is called maturation. Displays maximal activity during the budding process just prior to particle release from the cell. Also cleaves Nef and Vif, probably concomitantly with viral structural proteins on maturation of virus particles. Hydrolyzes host EIF4GI and PABP1 in order to shut off the capped cellular mRNA translation. The resulting inhibition of cellular protein synthesis serves to ensure maximal viral gene expression and to evade host immune response. Reverse transcriptase/ribonuclease H (RT) is a multifunctional enzyme that converts the viral dimeric RNA genome into dsDNA in the cytoplasm, shortly after virus entry into the cell. This enzyme displays a DNA polymerase activity that can copy either DNA or RNA templates, and a ribonuclease H (RNase H) activity that cleaves the RNA strand of RNA-DNA heteroduplexes in a partially processive 3' to 5' endonucleasic mode. Conversion of viral genomic RNA into dsDNA requires many steps. A tRNA binds to the primer-binding site (PBS) situated at the 5'-end of the viral RNA. RT uses the 3' end of the tRNA primer to perform a short round of RNA-dependent minus-strand DNA synthesis. The reading proceeds through the U5 region and ends after the repeated (R) region which is present at both ends of viral RNA. The portion of the RNA-DNA heteroduplex is digested by the RNase H, resulting in a ssDNA product attached to the tRNA primer. This ssDNA/tRNA hybridizes with the identical R region situated at the 3' end of viral RNA. This template exchange, known as minus-strand DNA strong stop transfer, can be either intra- or intermolecular. RT uses the 3' end of this newly synthesized short ssDNA to perform the RNA-dependent minus-strand DNA synthesis of the whole template. RNase H digests the RNA template except for two polypurine tracts (PPTs) situated at the 5'-end and near the center of the genome. It is not clear if both polymerase and RNase H activities are simultaneous. RNase H can probably proceed both in a polymerase-dependent (RNA cut into small fragments by the same RT performing DNA synthesis) and a polymerase-independent mode (cleavage of remaining RNA fragments by free RTs). Secondly, RT performs DNA-directed plus-strand DNA synthesis using the PPTs that have not been removed by RNase H as primers. PPTs and tRNA primers are then removed by RNase H. The 3' and 5' ssDNA PBS regions hybridize to form a circular dsDNA intermediate. Strand displacement synthesis by RT to the PBS and PPT ends produces a blunt ended, linear dsDNA copy of the viral genome that includes long terminal repeats (LTRs) at both ends. In terms of biological role, integrase catalyzes viral DNA integration into the host chromosome, by performing a series of DNA cutting and joining reactions. This enzyme activity takes place after virion entry into a cell and reverse transcription of the RNA genome in dsDNA. The first step in the integration process is 3' processing. This step requires a complex comprising the viral genome, matrix protein, Vpr and integrase. This complex is called the pre-integration complex (PIC). The integrase protein removes 2 nucleotides from each 3' end of the viral DNA, leaving recessed CA OH's at the 3' ends. In the second step, the PIC enters cell nucleus. This process is mediated through integrase and Vpr proteins, and allows the virus to infect a non dividing cell. This ability to enter the nucleus is specific of lentiviruses, other retroviruses cannot and rely on cell division to access cell chromosomes. In the third step, termed strand transfer, the integrase protein joins the previously processed 3' ends to the 5' ends of strands of target cellular DNA at the site of integration. The 5'-ends are produced by integrase-catalyzed staggered cuts, 5 bp apart. A Y-shaped, gapped, recombination intermediate results, with the 5'-ends of the viral DNA strands and the 3' ends of target DNA strands remaining unjoined, flanking a gap of 5 bp. The last step is viral DNA integration into host chromosome. This involves host DNA repair synthesis in which the 5 bp gaps between the unjoined strands are filled in and then ligated. Since this process occurs at both cuts flanking the SIV genome, a 5 bp duplication of host DNA is produced at the ends of SIV integration. Alternatively, Integrase may catalyze the excision of viral DNA just after strand transfer, this is termed disintegration. In Cercopithecidae (Old World monkeys), this protein is Gag-Pol polyprotein (gag-pol).